The sequence spans 186 residues: Imidazole glycerol phosphate synthase subunit HisH (186 aa).

Residues Met1–Ala186 form the Glutamine amidotransferase type-1 domain. The active-site Nucleophile is Cys72. Residues His167 and Glu169 contribute to the active site.

In terms of assembly, heterodimer of HisH and HisF.

The protein localises to the cytoplasm. It carries out the reaction 5-[(5-phospho-1-deoxy-D-ribulos-1-ylimino)methylamino]-1-(5-phospho-beta-D-ribosyl)imidazole-4-carboxamide + L-glutamine = D-erythro-1-(imidazol-4-yl)glycerol 3-phosphate + 5-amino-1-(5-phospho-beta-D-ribosyl)imidazole-4-carboxamide + L-glutamate + H(+). The enzyme catalyses L-glutamine + H2O = L-glutamate + NH4(+). The protein operates within amino-acid biosynthesis; L-histidine biosynthesis; L-histidine from 5-phospho-alpha-D-ribose 1-diphosphate: step 5/9. In terms of biological role, IGPS catalyzes the conversion of PRFAR and glutamine to IGP, AICAR and glutamate. The HisH subunit catalyzes the hydrolysis of glutamine to glutamate and ammonia as part of the synthesis of IGP and AICAR. The resulting ammonia molecule is channeled to the active site of HisF. The polypeptide is Imidazole glycerol phosphate synthase subunit HisH (Picrophilus torridus (strain ATCC 700027 / DSM 9790 / JCM 10055 / NBRC 100828 / KAW 2/3)).